Here is a 360-residue protein sequence, read N- to C-terminus: POU domain, class 5, transcription factor 1 (360 aa).

2 disordered regions span residues 1–50 (MAGH…IGPG) and 87–118 (QGGL…CAAP). A 9aaTAD motif is present at residues 4-12 (HLASDFAFS). A compositionally biased stretch (gly residues) spans 41 to 50 (PPGGSGIGPG). At Ser-111 the chain carries Phosphoserine; by MAPK. Lys-123 is covalently cross-linked (Glycyl lysine isopeptide (Lys-Gly) (interchain with G-Cter in SUMO)). Positions 138-212 (DIKALQKDLE…LLQKWVEEAD (75 aa)) constitute a POU-specific domain. DNA is bound by residues Arg-157 and Gln-164. DNA-binding regions lie at residues 180 to 186 (SQTTICR) and 193 to 196 (SFKN). The homeobox DNA-binding region spans 230–289 (RKRKRTSIENRVRGNLESMFLQCPKPTLQQISHIAQQLGLEKDVVRVWFCNRRQKGKRSS). Thr-235 is modified (phosphothreonine). 3 positions are modified to phosphoserine: Ser-236, Ser-289, and Ser-290. Residues 287-316 (RSSSDYSQREDFEAAGSPFPGGPVSFPLAP) are disordered. Residues 302–313 (GSPFPGGPVSFP) are compositionally biased toward low complexity. Ser-355 bears the Phosphoserine mark.

Belongs to the POU transcription factor family. Class-5 subfamily. Interacts with PKM. Interacts with WWP2. Interacts with UBE2I and ZSCAN10. Interacts with PCGF1. Interacts with ESRRB; recruits ESRRB near the POU5F1-SOX2 element in the NANOG proximal promoter; the interaction is DNA independent. Interacts with ZNF322. Interacts with MAPK8 and MAPK9; the interaction allows MAPK8 and MAPK9 to phosphorylate POU5F1 on Ser-355. Interacts (when phosphorylated on Ser-355) with FBXW8. Interacts with FBXW4. Interacts with SOX2 and SOX15; binds synergistically with either SOX2 or SOX15 to DNA. Interacts with DDX56. Post-translationally, sumoylation enhances the protein stability, DNA binding and transactivation activity. Sumoylation is required for enhanced YES1 expression. Ubiquitinated; undergoes 'Lys-63'-linked polyubiquitination by WWP2 leading to proteasomal degradation. In terms of processing, ERK1/2-mediated phosphorylation at Ser-111 promotes nuclear exclusion and proteasomal degradation. Phosphorylation at Thr-235 and Ser-236 decrease DNA-binding and alters ability to activate transcription.

It is found in the cytoplasm. The protein localises to the nucleus. Functionally, transcription factor that binds to the octamer motif (5'-ATTTGCAT-3'). Forms a trimeric complex with SOX2 or SOX15 on DNA and controls the expression of a number of genes involved in embryonic development such as YES1, FGF4, UTF1 and ZFP206. Critical for early embryogenesis and for embryonic stem cell pluripotency. This Sus scrofa (Pig) protein is POU domain, class 5, transcription factor 1 (POU5F1).